The following is an 89-amino-acid chain: Phosphocarrier protein HPr (89 aa).

Residues 1–88 (MLKQSIEIIN…DLINGYFGEG (88 aa)) form the HPr domain. The Pros-phosphohistidine intermediate role is filled by H15. S46 carries the post-translational modification Phosphoserine; by HPrK/P.

Belongs to the HPr family.

It localises to the cytoplasm. With respect to regulation, phosphorylation on Ser-46 inhibits the phosphoryl transfer from enzyme I to HPr. Functionally, general (non sugar-specific) component of the phosphoenolpyruvate-dependent sugar phosphotransferase system (sugar PTS). This major carbohydrate active-transport system catalyzes the phosphorylation of incoming sugar substrates concomitantly with their translocation across the cell membrane. The phosphoryl group from phosphoenolpyruvate (PEP) is transferred to the phosphoryl carrier protein HPr by enzyme I. Phospho-HPr then transfers it to the PTS EIIA domain. This chain is Phosphocarrier protein HPr (ptsH), found in Neisseria meningitidis serogroup A / serotype 4A (strain DSM 15465 / Z2491).